The chain runs to 417 residues: UDP-N-acetylglucosamine 1-carboxyvinyltransferase (417 aa).

Phosphoenolpyruvate is bound at residue 22-23 (KN). Arg-93 is a UDP-N-acetyl-alpha-D-glucosamine binding site. Cys-117 functions as the Proton donor in the catalytic mechanism. Cys-117 carries the post-translational modification 2-(S-cysteinyl)pyruvic acid O-phosphothioketal. UDP-N-acetyl-alpha-D-glucosamine contacts are provided by residues 122–126 (RPVDQ), Asp-304, and Ile-326.

The protein belongs to the EPSP synthase family. MurA subfamily.

It localises to the cytoplasm. The catalysed reaction is phosphoenolpyruvate + UDP-N-acetyl-alpha-D-glucosamine = UDP-N-acetyl-3-O-(1-carboxyvinyl)-alpha-D-glucosamine + phosphate. The protein operates within cell wall biogenesis; peptidoglycan biosynthesis. Functionally, cell wall formation. Adds enolpyruvyl to UDP-N-acetylglucosamine. The chain is UDP-N-acetylglucosamine 1-carboxyvinyltransferase from Neisseria meningitidis serogroup A / serotype 4A (strain DSM 15465 / Z2491).